The primary structure comprises 166 residues: Interferon gamma (166 aa).

The signal sequence occupies residues 1–23; it reads MKYTSYFLALQLCLLLGFSGSYG. The residue at position 24 (Gln24) is a Pyrrolidone carboxylic acid. N-linked (GlcNAc...) asparagine glycans are attached at residues Asn39 and Asn106.

Belongs to the type II (or gamma) interferon family. As to quaternary structure, homodimer. Interacts with IFNGR1 (via extracellular domain); this interaction promotes IFNGR1 dimerization. Released primarily from activated T lymphocytes.

It is found in the secreted. Functionally, type II interferon produced by immune cells such as T-cells and NK cells that plays crucial roles in antimicrobial, antiviral, and antitumor responses by activating effector immune cells and enhancing antigen presentation. Primarily signals through the JAK-STAT pathway after interaction with its receptor IFNGR1 to affect gene regulation. Upon IFNG binding, IFNGR1 intracellular domain opens out to allow association of downstream signaling components JAK2, JAK1 and STAT1, leading to STAT1 activation, nuclear translocation and transcription of IFNG-regulated genes. Many of the induced genes are transcription factors such as IRF1 that are able to further drive regulation of a next wave of transcription. Plays a role in class I antigen presentation pathway by inducing a replacement of catalytic proteasome subunits with immunoproteasome subunits. In turn, increases the quantity, quality, and repertoire of peptides for class I MHC loading. Increases the efficiency of peptide generation also by inducing the expression of activator PA28 that associates with the proteasome and alters its proteolytic cleavage preference. Up-regulates as well MHC II complexes on the cell surface by promoting expression of several key molecules such as cathepsins B/CTSB, H/CTSH, and L/CTSL. Participates in the regulation of hematopoietic stem cells during development and under homeostatic conditions by affecting their development, quiescence, and differentiation. This chain is Interferon gamma (IFNG), found in Moschus berezovskii (Chinese forest musk deer).